A 113-amino-acid chain; its full sequence is Retrotransposon Gag-like protein 8A (113 aa).

This sequence belongs to the FAM127 family.

The sequence is that of Retrotransposon Gag-like protein 8A from Homo sapiens (Human).